The primary structure comprises 223 residues: Ribonuclease 3 (223 aa).

One can recognise an RNase III domain in the interval 4-127; the sequence is LEEFERNLGY…VMGAIYLEAG (124 aa). Position 40 (Glu40) interacts with Mg(2+). Asp44 is an active-site residue. Mg(2+) is bound by residues Asp113 and Glu116. Residue Glu116 is part of the active site. Residues 154–223 enclose the DRBM domain; the sequence is DYKTALQEVT…AKIALEKIKK (70 aa).

The protein belongs to the ribonuclease III family. Homodimer. The cofactor is Mg(2+).

The protein localises to the cytoplasm. It carries out the reaction Endonucleolytic cleavage to 5'-phosphomonoester.. Digests double-stranded RNA. Involved in the processing of primary rRNA transcript to yield the immediate precursors to the large and small rRNAs (23S and 16S). Processes some mRNAs, and tRNAs when they are encoded in the rRNA operon. Processes pre-crRNA and tracrRNA of type II CRISPR loci if present in the organism. This chain is Ribonuclease 3, found in Campylobacter concisus (strain 13826).